The sequence spans 124 residues: MKTNCEFPLLCLLIVLVANVEGEVEDNELKMVKRLWRNWEDPEQRQLLDQEAEQEKQREKRLWRNWEDLELRQLLNEFAENQREKRLWRNWERRQVANEDDGEKPKELWRNWEDLKRRQVGRFE.

An N-terminal signal peptide occupies residues 1-22; that stretch reads MKTNCEFPLLCLLIVLVANVEG. A propeptide spanning residues 23 to 94 is cleaved from the precursor; it reads EVEDNELKMV…KRLWRNWERR (72 aa). RLWRNWE repeat units lie at residues 34 to 40, 61 to 67, and 86 to 92; these read RLWRNWE. The residue at position 95 (Gln-95) is a Pyrrolidone carboxylic acid. One copy of the RLWRNWE 4; approximate repeat lies at 107–113; that stretch reads ELWRNWE. Residues 112 to 124 constitute a propeptide that is removed on maturation; it reads WEDLKRRQVGRFE.

It belongs to the scoloptoxin-08 family. As to expression, expressed by the venom gland.

Its subcellular location is the secreted. This chain is U-scoloptoxin-Er5d, found in Ethmostigmus rubripes (Giant centipede).